Consider the following 216-residue polypeptide: UPF0548 protein (216 aa).

It belongs to the UPF0548 family.

This is UPF0548 protein from Dictyostelium discoideum (Social amoeba).